The sequence spans 333 residues: tRNA(Ile)-lysidine synthase (333 aa).

Residue 33 to 38 (SGGADS) coordinates ATP.

This sequence belongs to the tRNA(Ile)-lysidine synthase family.

It localises to the cytoplasm. The enzyme catalyses cytidine(34) in tRNA(Ile2) + L-lysine + ATP = lysidine(34) in tRNA(Ile2) + AMP + diphosphate + H(+). Functionally, ligates lysine onto the cytidine present at position 34 of the AUA codon-specific tRNA(Ile) that contains the anticodon CAU, in an ATP-dependent manner. Cytidine is converted to lysidine, thus changing the amino acid specificity of the tRNA from methionine to isoleucine. The polypeptide is tRNA(Ile)-lysidine synthase (Salinispora arenicola (strain CNS-205)).